A 137-amino-acid chain; its full sequence is uncharacterized protein (137 aa).

This sequence belongs to the ycf72 family.

The protein resides in the plastid. It is found in the chloroplast. This is an uncharacterized protein from Saccharum hybrid (Sugarcane).